The sequence spans 497 residues: Cobyric acid synthase (497 aa).

Residues 250–445 (EVTIAVIRLP…LHGIFNNGPW (196 aa)) form the GATase cobBQ-type domain. Cys-331 serves as the catalytic Nucleophile. The active site involves His-437.

This sequence belongs to the CobB/CobQ family. CobQ subfamily.

Its pathway is cofactor biosynthesis; adenosylcobalamin biosynthesis. Its function is as follows. Catalyzes amidations at positions B, D, E, and G on adenosylcobyrinic A,C-diamide. NH(2) groups are provided by glutamine, and one molecule of ATP is hydrogenolyzed for each amidation. This chain is Cobyric acid synthase, found in Acaryochloris marina (strain MBIC 11017).